The following is a 192-amino-acid chain: Casparian strip membrane protein 1 (192 aa).

Residues 1-26 lie on the Cytoplasmic side of the membrane; sequence MTKSVRLEEGDASKVLVPVGSNKGVS. Residues 27-47 traverse the membrane as a helical segment; it reads VMDLVLRLVGIAGTLGAAIAM. Topologically, residues 48–75 are extracellular; sequence GTNEQTLPFFTRFVVFNAEYDDFRSFRL. Residues 76 to 96 form a helical membrane-spanning segment; it reads FVIVNAIVCAYFVLTLPLSIV. Over 97 to 107 the chain is Cytoplasmic; sequence HIMRSAARGSR. A helical transmembrane segment spans residues 108-128; sequence ILLIIMDTVMLALLTAGASAA. The Extracellular portion of the chain corresponds to 129–161; sequence ASIVYLAHNGNTSTNWLPVCQQYGDFCQGASGS. N139 carries an N-linked (GlcNAc...) asparagine glycan. The chain crosses the membrane as a helical span at residues 162–182; the sequence is LIGSFGAVVVFILIILLGAIA. The Cytoplasmic portion of the chain corresponds to 183 to 192; that stretch reads LSRHAKRVVL.

It belongs to the Casparian strip membrane proteins (CASP) family. Homodimer and heterodimers.

It localises to the cell membrane. Regulates membrane-cell wall junctions and localized cell wall deposition. Required for establishment of the Casparian strip membrane domain (CSD) and the subsequent formation of Casparian strips, a cell wall modification of the root endodermis that determines an apoplastic barrier between the intraorganismal apoplasm and the extraorganismal apoplasm and prevents lateral diffusion. The protein is Casparian strip membrane protein 1 of Lactuca saligna (Willowleaf lettuce).